A 291-amino-acid polypeptide reads, in one-letter code: MSAQENSAPFLRIPPWLRTRIPCNRTYTATRELIGDLNLHTVCQSAKCPNMFECFSSRTATFLILGGTCTRNCAFCNIEPGDVLPPDAGEPQRVALAAARLELKHVVITSVTRDDLPDGGAAHFAATIQAVRSRLPRCTVEVLIPDFQGDAAALQTVLQARPDVLNHNVETPPAHYSRIRPQADYSQSLELLRRARAAGFTVKSGLMTGLGETDAEVLGVIDDLCATGCNIVTVGQYMRPSRRHPAVQRYVHPDMFEEYAAYGRARGIPHMFCAPLVRSSYNASMFVQEKN.

Positions 43, 48, 54, 69, 73, 76, and 280 each coordinate [4Fe-4S] cluster. A Radical SAM core domain is found at 55-269 (FSSRTATFLI…AAYGRARGIP (215 aa)).

Belongs to the radical SAM superfamily. Lipoyl synthase family. The cofactor is [4Fe-4S] cluster.

The protein resides in the cytoplasm. It catalyses the reaction [[Fe-S] cluster scaffold protein carrying a second [4Fe-4S](2+) cluster] + N(6)-octanoyl-L-lysyl-[protein] + 2 oxidized [2Fe-2S]-[ferredoxin] + 2 S-adenosyl-L-methionine + 4 H(+) = [[Fe-S] cluster scaffold protein] + N(6)-[(R)-dihydrolipoyl]-L-lysyl-[protein] + 4 Fe(3+) + 2 hydrogen sulfide + 2 5'-deoxyadenosine + 2 L-methionine + 2 reduced [2Fe-2S]-[ferredoxin]. It functions in the pathway protein modification; protein lipoylation via endogenous pathway; protein N(6)-(lipoyl)lysine from octanoyl-[acyl-carrier-protein]: step 2/2. In terms of biological role, catalyzes the radical-mediated insertion of two sulfur atoms into the C-6 and C-8 positions of the octanoyl moiety bound to the lipoyl domains of lipoate-dependent enzymes, thereby converting the octanoylated domains into lipoylated derivatives. In Oleidesulfovibrio alaskensis (strain ATCC BAA-1058 / DSM 17464 / G20) (Desulfovibrio alaskensis), this protein is Lipoyl synthase.